The chain runs to 507 residues: Zinc finger CCCH-type with G patch domain-containing protein (507 aa).

Methionine 1 is subject to N-acetylmethionine. A disordered region spans residues proline 88 to serine 125. Polar residues predominate over residues aspartate 94–alanine 111. A compositionally biased stretch (acidic residues) spans leucine 112–aspartate 123. Residues lysine 170–leucine 196 form a C3H1-type zinc finger. The segment at leucine 264–serine 283 is disordered. Serine 272 bears the Phosphoserine mark. Position 276 is a phosphothreonine (threonine 276). Positions threonine 309–glutamate 355 constitute a G-patch domain. Serine 349 is modified (phosphoserine). Disordered regions lie at residues lysine 359–asparagine 389 and alanine 486–phenylalanine 507. The segment covering glutamine 487 to phenylalanine 507 has biased composition (basic and acidic residues).

Interacts with CHD4/Mi-2; the interaction is direct.

The protein localises to the nucleus. Functionally, transcription repressor that specifically binds the 5'-GGAG[GA]A[GA]A-3' consensus sequence. Represses transcription by recruiting the chromatin multiprotein complex NuRD to target promoters. Negatively regulates expression of EGFR, a gene involved in cell proliferation, survival and migration. Its ability to repress genes of the EGFR pathway suggest it may act as a tumor suppressor. The protein is Zinc finger CCCH-type with G patch domain-containing protein (Zgpat) of Rattus norvegicus (Rat).